The primary structure comprises 101 residues: uncharacterized protein (101 aa).

This is an uncharacterized protein from Schizosaccharomyces pombe (strain 972 / ATCC 24843) (Fission yeast).